We begin with the raw amino-acid sequence, 680 residues long: Harmonin-binding protein USHBP1 (680 aa).

Basic residues predominate over residues M1 to H15. 2 disordered regions span residues M1 to P51 and K134 to Q161. Positions N179 to S218 form a coiled coil. Disordered stretches follow at residues P220 to D247 and T384 to E405. Coiled coils occupy residues T363–E386 and Q467–Q506. Positions F524–Q549 are disordered. A coiled-coil region spans residues Q573–A662.

The protein belongs to the MCC family. Interacts via its C-terminus with the first PDZ domain of USH1C.

The chain is Harmonin-binding protein USHBP1 from Mus musculus (Mouse).